A 96-amino-acid chain; its full sequence is Co-chaperonin GroES (96 aa).

It belongs to the GroES chaperonin family. Heptamer of 7 subunits arranged in a ring. Interacts with the chaperonin GroEL.

Its subcellular location is the cytoplasm. Its function is as follows. Together with the chaperonin GroEL, plays an essential role in assisting protein folding. The GroEL-GroES system forms a nano-cage that allows encapsulation of the non-native substrate proteins and provides a physical environment optimized to promote and accelerate protein folding. GroES binds to the apical surface of the GroEL ring, thereby capping the opening of the GroEL channel. The chain is Co-chaperonin GroES from Polynucleobacter asymbioticus (strain DSM 18221 / CIP 109841 / QLW-P1DMWA-1) (Polynucleobacter necessarius subsp. asymbioticus).